The chain runs to 162 residues: MGLETEKADVQLFMDDDSYSHHSGLEYADPEKFADSGQDRDPHRLNSHLKLGFEDVIAEPVTTHSFDKVWICSHALFEISKYVMYKFLTVFLAIPLAFIAGILFATLSCLHIWILMPFVKTCLMVLPSVQTIWKSVTDVIIAPLCTSVGRSFSSVSLQLSQD.

Residues Met1 to Lys86 are Cytoplasmic-facing. Tyr19 is subject to Phosphotyrosine; by SRC. Ser20 and Ser23 each carry phosphoserine. Tyr27 is subject to Phosphotyrosine; by SRC. A Phosphoserine modification is found at Ser36. Positions Phe87 to Leu107 form an intramembrane region, helical. The Cytoplasmic portion of the chain corresponds to Ser108–Asp162.

This sequence belongs to the caveolin family. Monomer or homodimer. Interacts with CAV1; the interaction forms a stable heterooligomeric complex that is required for targeting to lipid rafts and for caveolae formation. Tyrosine phosphorylated forms do not form heterooligomers with the Tyr-19-phosphorylated form existing as a monomer or dimer, and the Tyr-27-form as a monomer only. Interacts (tyrosine phosphorylated form) with the SH2 domain-containing proteins, RASA1, NCK1 and SRC. Interacts (tyrosine phosphorylated form) with INSR, the interaction (Tyr-27-phosphorylated form) is increased on insulin stimulation. Interacts (Tyr-19 phosphorylated form) with MAPK1 (phosphorylated form); the interaction, promoted by insulin, leads to nuclear location and MAPK1 activation. Interacts with STAT3; the interaction is increased on insulin-induced tyrosine phosphorylation leading to STAT activation. Phosphorylated on serine and tyrosine residues. CAV1 promotes phosphorylation on Ser-23 which then targets the complex to the plasma membrane, lipid rafts and caveolae. Phosphorylation on Ser-36 appears to modulate mitosis in endothelial cells. Phosphorylation on both Tyr-19 and Tyr-27 is required for insulin-induced 'Ser-727' phosphorylation of STAT3 and its activation. Phosphorylation on Tyr-19 is required for insulin-induced phosphorylation of MAPK1 and DNA binding of STAT3. Tyrosine phosphorylation is induced by both EGF and insulin (By. similarity).

The protein resides in the nucleus. It localises to the cytoplasm. It is found in the golgi apparatus membrane. The protein localises to the cell membrane. Its subcellular location is the membrane. The protein resides in the caveola. Functionally, may act as a scaffolding protein within caveolar membranes. Interacts directly with G-protein alpha subunits and can functionally regulate their activity. Acts as an accessory protein in conjunction with CAV1 in targeting to lipid rafts and driving caveolae formation. The Ser-36 phosphorylated form has a role in modulating mitosis in endothelial cells. Positive regulator of cellular mitogenesis of the MAPK signaling pathway. Required for the insulin-stimulated nuclear translocation and activation of MAPK1 and STAT3, and the subsequent regulation of cell cycle progression. This Pongo abelii (Sumatran orangutan) protein is Caveolin-2 (CAV2).